We begin with the raw amino-acid sequence, 84 residues long: Kappa-scoloptoxin(11)-Ssm3a (84 aa).

The signal sequence occupies residues 1 to 16 (MSWMFYSFIVFTLAIK).

The protein belongs to the scoloptoxin-11 family. Post-translationally, contains 2 disulfide bonds. As to expression, expressed by the venom gland.

It is found in the secreted. Its function is as follows. Inhibits voltage-gated potassium channel currents in DRG neurons. 200 nM of the toxin inhibits current amplitude by only 25% and even at concentrations up to 5 uM, the toxin does not inhibit all potassium currents. In vivo, insects injected with this toxin showed signs of neurotoxicity including twitching, paralysis, and body contraction. This Scolopendra mutilans (Chinese red-headed centipede) protein is Kappa-scoloptoxin(11)-Ssm3a.